The primary structure comprises 64 residues: MSKLKGPDGRIPDRLPDGRPAVAWERRWTEGTLPLWLVATAGGIAVIFVLGIFFYGSYQGVGAG.

A helical membrane pass occupies residues 35–55; the sequence is LWLVATAGGIAVIFVLGIFFY.

It belongs to the PsbJ family. In terms of assembly, PSII is composed of 1 copy each of membrane proteins PsbA, PsbB, PsbC, PsbD, PsbE, PsbF, PsbH, PsbI, PsbJ, PsbK, PsbL, PsbM, PsbT, PsbX, PsbY, Psb30/Ycf12, peripheral proteins PsbO, CyanoQ (PsbQ), PsbU, PsbV and a large number of cofactors. It forms dimeric complexes.

The protein localises to the cellular thylakoid membrane. Its function is as follows. One of the components of the core complex of photosystem II (PSII). PSII is a light-driven water:plastoquinone oxidoreductase that uses light energy to abstract electrons from H(2)O, generating O(2) and a proton gradient subsequently used for ATP formation. It consists of a core antenna complex that captures photons, and an electron transfer chain that converts photonic excitation into a charge separation. The chain is Photosystem II reaction center protein J from Prochlorococcus marinus (strain MIT 9515).